The sequence spans 1032 residues: Exportin-T (1032 aa).

The protein belongs to the exportin family.

The protein resides in the nucleus. It is found in the cytoplasm. Its function is as follows. tRNA nucleus export receptor which facilitates tRNA translocation across the nuclear pore complex. Involved in pre-tRNA splicing, probably by affecting the interaction of pre-tRNA with splicing endonuclease. The chain is Exportin-T (los1) from Aspergillus fumigatus (strain CBS 144.89 / FGSC A1163 / CEA10) (Neosartorya fumigata).